The primary structure comprises 489 residues: Toxin coregulated pilus biosynthesis outer membrane protein C (489 aa).

An N-terminal signal peptide occupies residues 1–16 (MKKTIISTLVIGLVSG). Cysteine 17 is lipidated: N-palmitoyl cysteine. Residue cysteine 17 is the site of S-diacylglycerol cysteine attachment. 4 helical membrane-spanning segments follow: residues 174–190 (FSSS…SSGL), 294–308 (AISL…GASY), 402–417 (QLVS…LPTV), and 442–457 (NYIQ…GGGT).

It is found in the cell membrane. Involved in TCP pilus biogenesis. The sequence is that of Toxin coregulated pilus biosynthesis outer membrane protein C (tcpC) from Vibrio cholerae serotype O1 (strain ATCC 39315 / El Tor Inaba N16961).